A 188-amino-acid chain; its full sequence is dCTP deaminase (188 aa).

DCTP-binding positions include Lys-111–Arg-116, Thr-135–Glu-137, Gln-156, Tyr-170, Lys-179, and Gln-180. Glu-137 functions as the Proton donor/acceptor in the catalytic mechanism.

Belongs to the dCTP deaminase family. Homotrimer.

The enzyme catalyses dCTP + H2O + H(+) = dUTP + NH4(+). It participates in pyrimidine metabolism; dUMP biosynthesis; dUMP from dCTP (dUTP route): step 1/2. In terms of biological role, catalyzes the deamination of dCTP to dUTP. This chain is dCTP deaminase, found in Rickettsia felis (strain ATCC VR-1525 / URRWXCal2) (Rickettsia azadi).